Consider the following 223-residue polypeptide: Enolase-phosphatase E1 (223 aa).

The protein belongs to the HAD-like hydrolase superfamily. MasA/MtnC family. Monomer. It depends on Mg(2+) as a cofactor.

The catalysed reaction is 5-methylsulfanyl-2,3-dioxopentyl phosphate + H2O = 1,2-dihydroxy-5-(methylsulfanyl)pent-1-en-3-one + phosphate. It participates in amino-acid biosynthesis; L-methionine biosynthesis via salvage pathway; L-methionine from S-methyl-5-thio-alpha-D-ribose 1-phosphate: step 3/6. The protein operates within amino-acid biosynthesis; L-methionine biosynthesis via salvage pathway; L-methionine from S-methyl-5-thio-alpha-D-ribose 1-phosphate: step 4/6. In terms of biological role, bifunctional enzyme that catalyzes the enolization of 2,3-diketo-5-methylthiopentyl-1-phosphate (DK-MTP-1-P) into the intermediate 2-hydroxy-3-keto-5-methylthiopentenyl-1-phosphate (HK-MTPenyl-1-P), which is then dephosphorylated to form the acireductone 1,2-dihydroxy-3-keto-5-methylthiopentene (DHK-MTPene). The protein is Enolase-phosphatase E1 of Aquifex aeolicus (strain VF5).